The chain runs to 337 residues: Eukaryotic translation initiation factor 3 subunit H (337 aa).

Residues 21 to 153 (VQCDGLAVMK…LKAYRLTPQA (133 aa)) form the MPN domain.

The protein belongs to the eIF-3 subunit H family. In terms of assembly, component of the eukaryotic translation initiation factor 3 (eIF-3) complex. The eIF-3 complex interacts with pix. Interacts with mxt.

Its subcellular location is the cytoplasm. Component of the eukaryotic translation initiation factor 3 (eIF-3) complex, which is involved in protein synthesis of a specialized repertoire of mRNAs and, together with other initiation factors, stimulates binding of mRNA and methionyl-tRNAi to the 40S ribosome. The eIF-3 complex specifically targets and initiates translation of a subset of mRNAs involved in cell proliferation. The polypeptide is Eukaryotic translation initiation factor 3 subunit H (Drosophila virilis (Fruit fly)).